Reading from the N-terminus, the 407-residue chain is Eukaryotic initiation factor 4A-II (407 aa).

A disordered region spans residues 1–22; that stretch reads MSGGSADYNREHGGPEGMDPDG. Positions 33–61 match the Q motif motif; it reads DNFDDMNLKESLLRGIYAYGFEKPSAIQQ. Residues 64–235 enclose the Helicase ATP-binding domain; that stretch reads IIPCIKGYDV…KKFMRDPIRI (172 aa). Residue 77-84 coordinates ATP; the sequence is AQSGTGKT. Residue threonine 159 is modified to Phosphothreonine. Positions 183 to 186 match the DEAD box motif; that stretch reads DEAD. The 162-residue stretch at 246 to 407 folds into the Helicase C-terminal domain; the sequence is GIKQFYINVE…EMPMNVADLI (162 aa).

The protein belongs to the DEAD box helicase family. eIF4A subfamily. EIF4F is a multi-subunit complex, the composition of which varies with external and internal environmental conditions. It is composed of at least EIF4A, EIF4E and EIF4G1/EIFFG3. Interacts with EIF4E. May interact with NOM1.

It carries out the reaction ATP + H2O = ADP + phosphate + H(+). Functionally, ATP-dependent RNA helicase which is a subunit of the eIF4F complex involved in cap recognition and is required for mRNA binding to ribosome. In the current model of translation initiation, eIF4A unwinds RNA secondary structures in the 5'-UTR of mRNAs which is necessary to allow efficient binding of the small ribosomal subunit, and subsequent scanning for the initiator codon. In Bos taurus (Bovine), this protein is Eukaryotic initiation factor 4A-II (EIF4A2).